A 44-amino-acid chain; its full sequence is Photosystem II reaction center protein J (44 aa).

Residues 12–32 (IPLWIVGFVVGSLALGLLGIL) traverse the membrane as a helical segment.

Belongs to the PsbJ family. In terms of assembly, PSII is composed of 1 copy each of membrane proteins PsbA, PsbB, PsbC, PsbD, PsbE, PsbF, PsbH, PsbI, PsbJ, PsbK, PsbL, PsbM, PsbT, PsbY, PsbZ, Psb30/Ycf12, at least 3 peripheral proteins of the oxygen-evolving complex and a large number of cofactors. It forms dimeric complexes.

It is found in the plastid. Its subcellular location is the chloroplast thylakoid membrane. Functionally, one of the components of the core complex of photosystem II (PSII). PSII is a light-driven water:plastoquinone oxidoreductase that uses light energy to abstract electrons from H(2)O, generating O(2) and a proton gradient subsequently used for ATP formation. It consists of a core antenna complex that captures photons, and an electron transfer chain that converts photonic excitation into a charge separation. This is Photosystem II reaction center protein J from Bigelowiella natans (Pedinomonas minutissima).